Here is a 186-residue protein sequence, read N- to C-terminus: ATP synthase subunit delta (186 aa).

Belongs to the ATPase delta chain family. In terms of assembly, F-type ATPases have 2 components, F(1) - the catalytic core - and F(0) - the membrane proton channel. F(1) has five subunits: alpha(3), beta(3), gamma(1), delta(1), epsilon(1). F(0) has three main subunits: a(1), b(2) and c(10-14). The alpha and beta chains form an alternating ring which encloses part of the gamma chain. F(1) is attached to F(0) by a central stalk formed by the gamma and epsilon chains, while a peripheral stalk is formed by the delta and b chains.

The protein localises to the cell membrane. In terms of biological role, f(1)F(0) ATP synthase produces ATP from ADP in the presence of a proton or sodium gradient. F-type ATPases consist of two structural domains, F(1) containing the extramembraneous catalytic core and F(0) containing the membrane proton channel, linked together by a central stalk and a peripheral stalk. During catalysis, ATP synthesis in the catalytic domain of F(1) is coupled via a rotary mechanism of the central stalk subunits to proton translocation. Functionally, this protein is part of the stalk that links CF(0) to CF(1). It either transmits conformational changes from CF(0) to CF(1) or is implicated in proton conduction. In Wolbachia sp. subsp. Brugia malayi (strain TRS), this protein is ATP synthase subunit delta.